A 596-amino-acid polypeptide reads, in one-letter code: Choline dehydrogenase, mitochondrial (596 aa).

The transit peptide at 1–34 (MWQVLRGWRKGWQSPRGALAWAVQGQPCPPCSRA) directs the protein to the mitochondrion. 44-73 (TFVVVGAGSAGCVLASRLTEDPNHRVLLLE) serves as a coordination point for FAD. An N6-succinyllysine modification is found at Lys-438. Lys-486 and Lys-498 each carry N6-acetyllysine; alternate. Residues Lys-486 and Lys-498 each carry the N6-succinyllysine; alternate modification. His-513 acts as the Proton acceptor in catalysis. Position 582 is an N6-acetyllysine (Lys-582).

Belongs to the GMC oxidoreductase family. FAD serves as cofactor. In terms of processing, acetylation of Lys-498 is observed in liver mitochondria from fasted mice but not from fed mice.

The protein resides in the mitochondrion inner membrane. It carries out the reaction choline + A = betaine aldehyde + AH2. Its pathway is amine and polyamine biosynthesis; betaine biosynthesis via choline pathway; betaine aldehyde from choline (cytochrome c reductase route): step 1/1. This chain is Choline dehydrogenase, mitochondrial (Chdh), found in Mus musculus (Mouse).